We begin with the raw amino-acid sequence, 142 residues long: HTH-type transcriptional regulator MntR (142 aa).

Residues 1-63 form the HTH dtxR-type domain; the sequence is MTTPSMEDYI…YEKYRGLVLT (63 aa). Aspartate 8, glutamate 11, histidine 77, glutamate 99, glutamate 102, and histidine 103 together coordinate Mn(2+).

This sequence belongs to the DtxR/MntR family. Homodimer.

It is found in the cytoplasm. DNA binding is strongly activated by Mn(2+). Its function is as follows. Central regulator of manganese homeostasis. The polypeptide is HTH-type transcriptional regulator MntR (Bacillus velezensis (strain DSM 23117 / BGSC 10A6 / LMG 26770 / FZB42) (Bacillus amyloliquefaciens subsp. plantarum)).